The primary structure comprises 637 residues: 1-deoxy-D-xylulose-5-phosphate synthase (637 aa).

Thiamine diphosphate-binding positions include histidine 76 and 117–119; that span reads GHS. A Mg(2+)-binding site is contributed by aspartate 148. Thiamine diphosphate contacts are provided by residues 149–150, asparagine 177, tyrosine 294, and glutamate 381; that span reads GA. Mg(2+) is bound at residue asparagine 177.

This sequence belongs to the transketolase family. DXPS subfamily. Homodimer. The cofactor is Mg(2+). Requires thiamine diphosphate as cofactor.

It catalyses the reaction D-glyceraldehyde 3-phosphate + pyruvate + H(+) = 1-deoxy-D-xylulose 5-phosphate + CO2. The protein operates within metabolic intermediate biosynthesis; 1-deoxy-D-xylulose 5-phosphate biosynthesis; 1-deoxy-D-xylulose 5-phosphate from D-glyceraldehyde 3-phosphate and pyruvate: step 1/1. In terms of biological role, catalyzes the acyloin condensation reaction between C atoms 2 and 3 of pyruvate and glyceraldehyde 3-phosphate to yield 1-deoxy-D-xylulose-5-phosphate (DXP). In Neisseria gonorrhoeae (strain NCCP11945), this protein is 1-deoxy-D-xylulose-5-phosphate synthase.